The chain runs to 197 residues: Proteinase inhibitor type-2 (197 aa).

The signal sequence occupies residues 1-24 (MAVHKVSFVAHLLVLGMFLLLVDA). Repeat copies occupy residues 24 to 80 (AKAC…DPKN), 81 to 140 (PNVC…DEPK), and 141 to 196 (SCTT…PQSA). Cystine bridges form between C27–C115, C31–C111, C39–C121, C51–C88, C54–C72, C55–C84, C61–C97, and C114–C132.

This sequence belongs to the protease inhibitor I20 (potato type II proteinase inhibitor) family.

The sequence is that of Proteinase inhibitor type-2 from Nicotiana tabacum (Common tobacco).